Reading from the N-terminus, the 1463-residue chain is DNA-directed RNA polymerase subunit beta'' (1463 aa).

4 residues coordinate Zn(2+): C239, C312, C319, and C322. Disordered stretches follow at residues 836–869 (TFTG…ETRM) and 987–1007 (TNRS…AQAR). Polar residues predominate over residues 860 to 869 (AANSSHETRM). Positions 987–996 (TNRSKTRRNA) are enriched in basic residues. Residues 997–1007 (SGKTQVKAQAR) show a composition bias toward polar residues.

It belongs to the RNA polymerase beta' chain family. RpoC2 subfamily. In plastids the minimal PEP RNA polymerase catalytic core is composed of four subunits: alpha, beta, beta', and beta''. When a (nuclear-encoded) sigma factor is associated with the core the holoenzyme is formed, which can initiate transcription. Zn(2+) serves as cofactor.

The protein resides in the plastid. Its subcellular location is the chloroplast. The enzyme catalyses RNA(n) + a ribonucleoside 5'-triphosphate = RNA(n+1) + diphosphate. In terms of biological role, DNA-dependent RNA polymerase catalyzes the transcription of DNA into RNA using the four ribonucleoside triphosphates as substrates. In Nephroselmis olivacea (Green alga), this protein is DNA-directed RNA polymerase subunit beta''.